The chain runs to 985 residues: MAGIVHGILFCGLFGLCWAVTGSRIYPASEVTLLDSRSVQGELGWIASPLEGGWEEVSIMDEKNTPIRTYQVCNVMESSQNNWLRTDWIPRSGAQRVYVEIKFTLRDCNSLPGVMGTCKETFNLYYYESNNDKERFIRETQYVKIDTIAADESFTQVDIGDRIMKLNTEVRDVGPLSKKGFYLAFQDVGACIALVSVRVFYKKCPLTVRNLAQFPDTITGSDTSSLVEVRGSCVDNSEEKDVPKMYCGADGEWLVPIGNCLCNAGFEEHNGGCQACKVGYYKALSTDAACSKCPPHSYALREGSTSCTCDRGYFRADTDPASMPCTRPPSAPQNLISNVNETSVNLEWSPPQNSGGRPDVSYNLVCKRCGSDLTRCSPCGSGVHYSPQQNGLKTTKVSINDLQAHTNYTFEVWAINGVSKQNPEQDQAVSVTVTTNQAAPSTVTQIQPKEITRHSVSLTWPEPERANGVILEYEVKYYEKDQNERSYRIVKTASRSADIKGLNPLTGYVFHVRARTAAGYGEFSGPFEFTTNTVPSPMIGEGTSPTVLLVSVAGSIVLVVILIAAFVISRRRSKYSKAKQEADEEKHLNQGVKTYVDPFTYEDPNQAVREFAKEIDASCIKIEKVIGVGEFGEVCSGRLKVPGKREIYVAIKTLKAGYTDKQRRDFLSEASIMGQFDHPNIIHLEGVVTKCKPVMIITEYMENGSLDAFLRKNDGRFTVIQLVGMLRGIGSGMKYLSDMSYVHRDLAARNILVNSNLVCKVSDFGMSRVLEDDPEAAYTTRGGKIPIRWTAPEAIAYRKFTSASDVWSYGIVMWEVMSYGERPYWDMSNQDVIKAIEEGYRLPPPMDCPIALHQLMLDCWQKDRSDRPKFGQIVSMLDKLIRNPNSLKRTGLENSRTNTALLDPSSPEWSQVASVLDWLQASKWKRYKDNFTAAGYTSLEAVVHVNQDDLTRIGISSPSHQNKILSSVQGMRTQLQQMQGRMVPV.

The N-terminal stretch at 1–20 (MAGIVHGILFCGLFGLCWAV) is a signal peptide. The Extracellular portion of the chain corresponds to 21 to 547 (TGSRIYPASE…MIGEGTSPTV (527 aa)). Residues 30 to 209 (EVTLLDSRSV…FYKKCPLTVR (180 aa)) enclose the Eph LBD domain. Fibronectin type-III domains are found at residues 328–438 (PPSA…TNQA) and 439–536 (APST…TVPS). 2 N-linked (GlcNAc...) asparagine glycosylation sites follow: asparagine 340 and asparagine 407. A helical transmembrane segment spans residues 548–569 (LLVSVAGSIVLVVILIAAFVIS). Over 570 to 985 (RRRSKYSKAK…QQMQGRMVPV (416 aa)) the chain is Cytoplasmic. Residues tyrosine 595 and tyrosine 601 each carry the phosphotyrosine; by autocatalysis modification. Positions 620-881 (IKIEKVIGVG…QIVSMLDKLI (262 aa)) constitute a Protein kinase domain. ATP contacts are provided by residues 626–634 (IGVGEFGEV) and lysine 652. Aspartate 745 acts as the Proton acceptor in catalysis. Residues tyrosine 778 and tyrosine 927 each carry the phosphotyrosine; by autocatalysis modification. Positions 910–974 (SQVASVLDWL…LSSVQGMRTQ (65 aa)) constitute an SAM domain. The PDZ-binding signature appears at 983 to 985 (VPV).

The protein belongs to the protein kinase superfamily. Tyr protein kinase family. Ephrin receptor subfamily. As to expression, localized expression in a subset of neural crest and neural tissues in embryos.

The protein resides in the cell membrane. The protein localises to the early endosome. The catalysed reaction is L-tyrosyl-[protein] + ATP = O-phospho-L-tyrosyl-[protein] + ADP + H(+). In terms of biological role, receptor tyrosine kinase which binds membrane-bound ephrin family ligands residing on adjacent cells, leading to contact-dependent bidirectional signaling into neighboring cells. The signaling pathway downstream of the receptor is referred to as forward signaling while the signaling pathway downstream of the ephrin ligand is referred to as reverse signaling. Highly promiscuous, it has the unique property among Eph receptors to bind and to be physiologically activated by both GPI-anchored ephrin-A and transmembrane ephrin-B ligands including EFNA1 and EFNB3. Upon activation by ephrin ligands, modulates cell morphology and integrin-dependent cell adhesion through regulation of the Rac, Rap and Rho GTPases activity. Plays an important role in the development of the nervous system controlling different steps of axonal guidance including the establishment of the corticospinal projections. The protein is Ephrin type-A receptor 4-B (epha4-b) of Xenopus laevis (African clawed frog).